The chain runs to 1061 residues: Carbamoyl phosphate synthase large chain (1061 aa).

Positions 1 to 401 are carboxyphosphate synthetic domain; that stretch reads MPKRTDVHKI…ALQKAVRSLE (401 aa). Arg129, Arg169, Gly175, Gly176, Lys208, Ile210, Glu215, Gly241, Ile242, His243, Gln284, and Glu298 together coordinate ATP. Residues 133-327 enclose the ATP-grasp 1 domain; it reads KDLMQELNEP…IAKLAAKIAV (195 aa). Residues Gln284, Glu298, and Asn300 each contribute to the Mg(2+) site. Gln284, Glu298, and Asn300 together coordinate Mn(2+). An oligomerization domain region spans residues 402–546; the sequence is IDEKDLISAK…YSSYDLENES (145 aa). The carbamoyl phosphate synthetic domain stretch occupies residues 547-929; it reads KKSDKKSVLV…ALYKAFTGAK (383 aa). In terms of domain architecture, ATP-grasp 2 spans 671–861; sequence DQTIKNLGLK…MAQVATRVIL (191 aa). Positions 707, 746, 748, 752, 777, 778, 779, 780, 820, and 832 each coordinate ATP. Mg(2+) contacts are provided by Gln820, Glu832, and Asn834. 3 residues coordinate Mn(2+): Gln820, Glu832, and Asn834. In terms of domain architecture, MGS-like spans 930-1061; the sequence is MELPDNGNVL…ENRSFATNSL (132 aa). Residues 930 to 1061 form an allosteric domain region; sequence MELPDNGNVL…ENRSFATNSL (132 aa).

It belongs to the CarB family. As to quaternary structure, composed of two chains; the small (or glutamine) chain promotes the hydrolysis of glutamine to ammonia, which is used by the large (or ammonia) chain to synthesize carbamoyl phosphate. Tetramer of heterodimers (alpha,beta)4. The cofactor is Mg(2+). Mn(2+) serves as cofactor.

The catalysed reaction is hydrogencarbonate + L-glutamine + 2 ATP + H2O = carbamoyl phosphate + L-glutamate + 2 ADP + phosphate + 2 H(+). It catalyses the reaction hydrogencarbonate + NH4(+) + 2 ATP = carbamoyl phosphate + 2 ADP + phosphate + 2 H(+). The protein operates within amino-acid biosynthesis; L-arginine biosynthesis; carbamoyl phosphate from bicarbonate: step 1/1. It functions in the pathway pyrimidine metabolism; UMP biosynthesis via de novo pathway; (S)-dihydroorotate from bicarbonate: step 1/3. Its function is as follows. Large subunit of the glutamine-dependent carbamoyl phosphate synthetase (CPSase). CPSase catalyzes the formation of carbamoyl phosphate from the ammonia moiety of glutamine, carbonate, and phosphate donated by ATP, constituting the first step of 2 biosynthetic pathways, one leading to arginine and/or urea and the other to pyrimidine nucleotides. The large subunit (synthetase) binds the substrates ammonia (free or transferred from glutamine from the small subunit), hydrogencarbonate and ATP and carries out an ATP-coupled ligase reaction, activating hydrogencarbonate by forming carboxy phosphate which reacts with ammonia to form carbamoyl phosphate. The protein is Carbamoyl phosphate synthase large chain of Ligilactobacillus salivarius (strain UCC118) (Lactobacillus salivarius).